Reading from the N-terminus, the 202-residue chain is Cytochrome c oxidase assembly protein CtaG (202 aa).

Residues 1–14 (MTSPANPSEVTRDR) are Cytoplasmic-facing. The helical; Signal-anchor for type II membrane protein transmembrane segment at 15–37 (RNRGVAFVCAGVFVAMVGMSFAA) threads the bilayer. Topologically, residues 38–202 (VPLYRLFCQV…GAAKTQKLGG (165 aa)) are periplasmic.

This sequence belongs to the COX11/CtaG family.

The protein localises to the cell inner membrane. Exerts its effect at some terminal stage of cytochrome c oxidase synthesis, probably by being involved in the insertion of the copper B into subunit I. This Chelativorans sp. (strain BNC1) protein is Cytochrome c oxidase assembly protein CtaG.